The sequence spans 611 residues: Elongation factor 4 (611 aa).

The 183-residue stretch at 12–194 folds into the tr-type G domain; sequence SRIRNFSIIA…QIVEKVPAPA (183 aa). GTP contacts are provided by residues 24-29 and 141-144; these read DHGKST and NKID.

Belongs to the TRAFAC class translation factor GTPase superfamily. Classic translation factor GTPase family. LepA subfamily.

The protein resides in the cell membrane. It carries out the reaction GTP + H2O = GDP + phosphate + H(+). In terms of biological role, required for accurate and efficient protein synthesis under certain stress conditions. May act as a fidelity factor of the translation reaction, by catalyzing a one-codon backward translocation of tRNAs on improperly translocated ribosomes. Back-translocation proceeds from a post-translocation (POST) complex to a pre-translocation (PRE) complex, thus giving elongation factor G a second chance to translocate the tRNAs correctly. Binds to ribosomes in a GTP-dependent manner. This Bacillus velezensis (strain DSM 23117 / BGSC 10A6 / LMG 26770 / FZB42) (Bacillus amyloliquefaciens subsp. plantarum) protein is Elongation factor 4.